Here is a 465-residue protein sequence, read N- to C-terminus: Mitochondrial F-box protein MFB1 (465 aa).

The region spanning 14 to 60 (ERSLTNLPLNLLFRILSHLDMNDLQNIGKTCTLLRMLANENIVYRNA) is the F-box domain. Positions 253–279 (FTKSRDPDYKEMTPTSTESSDSITRLR) are disordered. Residues 254–263 (TKSRDPDYKE) show a composition bias toward basic and acidic residues. Polar residues predominate over residues 265–275 (TPTSTESSDSI).

Its subcellular location is the mitochondrion. In Saccharomyces cerevisiae (strain ATCC 204508 / S288c) (Baker's yeast), this protein is Mitochondrial F-box protein MFB1 (MFB1).